The following is a 68-amino-acid chain: Large ribosomal subunit protein eL24 (68 aa).

Residues cysteine 7, cysteine 10, cysteine 33, and cysteine 37 each contribute to the Zn(2+) site. The C4-type zinc-finger motif lies at 7-37 (CDFCGRIIEPGTGKMFVKNDGTILWFCSSKC).

This sequence belongs to the eukaryotic ribosomal protein eL24 family. In terms of assembly, part of the 50S ribosomal subunit. Forms a cluster with proteins L3 and L14. Requires Zn(2+) as cofactor.

Binds to the 23S rRNA. This is Large ribosomal subunit protein eL24 from Methanopyrus kandleri (strain AV19 / DSM 6324 / JCM 9639 / NBRC 100938).